The primary structure comprises 497 residues: MGMASMSSGTESLRLCVFDLRRGQHEGQELDKILFFYPPDLTFSTQLSVIGLSEGLITFTRLFSPEAACEVIEAERHSHVFYEAEPDIWMVMIVEKNKEIEAVWRIDALRRVLKEVHSLFVMFQGSIRALLEKEPTGGLVRSHLYPFITDYLNDLFVGKKQQLPSFRDTLKERGTVQMLTLARDAALEVQSLVGVLDSCAGTVRCHSVILFHDLLVSTTLSPDDTVDLFAFSVMRLTTNALSSGTSSWSYLRKGSGSPQISSRSTTVPPLGSGGTLPSGNGSSTGRVIRPLQHDKWSKGKDGFLVTDIWGLDATPTILIQKTQESFYLLTYQYKSLTLVLLVPIAAIVNGELDISFVKQQVIENASTKILKVEEKLSKGWGGENAYHVSGYRYLLVDNDMEVSRASPPGKVATLAKESLLALNKLREEVDTEKNRSKQEKDMEICIRAKNNTWVIARLNRGKELYMALEKASETLLDATDSVQRFSNRYCSGAFPMD.

The interval 244–284 is disordered; the sequence is GTSSWSYLRKGSGSPQISSRSTTVPPLGSGGTLPSGNGSST.

The protein belongs to the CCZ1 family. In terms of assembly, interacts with MON1.

It is found in the endosome. The protein localises to the prevacuolar compartment. Plays an important role in membrane trafficking through the secretory apparatus. In complex with MON1, acts as a guanine exchange factor (GEF) for RABG3F of the RAB7 protein family. Promotes the exchange of GDP to GTP, converting RABG3F from an inactive GDP-bound form into an active GTP-bound form. The RABG3F active form is involved in protein trafficking from prevacuolar compartments (PVCs) to vacuoles. May serve as a linker between Rab5 and Rab7 protein families in PVCs and mediate PVC maturation. The sequence is that of Vacuolar fusion protein CCZ1 homolog B from Arabidopsis thaliana (Mouse-ear cress).